We begin with the raw amino-acid sequence, 353 residues long: Chorismate synthase (353 aa).

Residue Arg-48 coordinates NADP(+). Residues 125-127, 238-239, Gly-278, 293-297, and Arg-319 each bind FMN; these read RSS, NA, and KPTSS.

Belongs to the chorismate synthase family. Homotetramer. FMNH2 serves as cofactor.

It catalyses the reaction 5-O-(1-carboxyvinyl)-3-phosphoshikimate = chorismate + phosphate. The protein operates within metabolic intermediate biosynthesis; chorismate biosynthesis; chorismate from D-erythrose 4-phosphate and phosphoenolpyruvate: step 7/7. Its function is as follows. Catalyzes the anti-1,4-elimination of the C-3 phosphate and the C-6 proR hydrogen from 5-enolpyruvylshikimate-3-phosphate (EPSP) to yield chorismate, which is the branch point compound that serves as the starting substrate for the three terminal pathways of aromatic amino acid biosynthesis. This reaction introduces a second double bond into the aromatic ring system. This Buchnera aphidicola subsp. Cinara cedri (strain Cc) protein is Chorismate synthase.